Consider the following 82-residue polypeptide: UPF0298 protein SMU_1670c (82 aa).

This sequence belongs to the UPF0298 family.

The protein resides in the cytoplasm. In Streptococcus mutans serotype c (strain ATCC 700610 / UA159), this protein is UPF0298 protein SMU_1670c.